The following is a 421-amino-acid chain: Proton extrusion protein PxcA (421 aa).

The segment at 124–153 (PTVHSSNPDDSQLMTSKNNSKPVPDPESDD) is disordered. Positions 125-144 (TVHSSNPDDSQLMTSKNNSK) are enriched in polar residues. 4 helical membrane-spanning segments follow: residues 203–223 (FVLLLVLVPLLTQQISKSFIV), 298–318 (AIKNIFADLISAAAFAILLIS), 345–365 (IIILFTDIFVGFHSPHGWEVI), and 381–401 (FIFLFIATFPVILDTIFKYWI).

It belongs to the CemA family.

Its subcellular location is the cell inner membrane. Functionally, required for H(+) efflux immediately after light irradiation to form a rapid H(+) concentration gradient across the thylakoid membranes. Together with PxcL, contributes to transient H(+) uptake following dark to light transition. The protein is Proton extrusion protein PxcA of Synechococcus sp. (strain ATCC 27144 / PCC 6301 / SAUG 1402/1) (Anacystis nidulans).